Reading from the N-terminus, the 210-residue chain is Na(+)-translocating NADH-quinone reductase subunit D (210 aa).

The next 6 membrane-spanning stretches (helical) occupy residues 10–30, 42–62, 72–92, 103–123, 131–151, and 178–198; these read VLIG…GVCS, LVMT…ISLI, IIVQ…VLQA, VFVG…AYAM, FMDG…VGFV, and NGLL…IWII.

This sequence belongs to the NqrDE/RnfAE family. In terms of assembly, composed of six subunits; NqrA, NqrB, NqrC, NqrD, NqrE and NqrF.

The protein localises to the cell inner membrane. The catalysed reaction is a ubiquinone + n Na(+)(in) + NADH + H(+) = a ubiquinol + n Na(+)(out) + NAD(+). NQR complex catalyzes the reduction of ubiquinone-1 to ubiquinol by two successive reactions, coupled with the transport of Na(+) ions from the cytoplasm to the periplasm. NqrA to NqrE are probably involved in the second step, the conversion of ubisemiquinone to ubiquinol. In Shewanella pealeana (strain ATCC 700345 / ANG-SQ1), this protein is Na(+)-translocating NADH-quinone reductase subunit D.